A 436-amino-acid polypeptide reads, in one-letter code: GTPase Der (436 aa).

2 EngA-type G domains span residues 4–167 and 175–351; these read PTIA…PAQE and IKFS…ESQN. GTP is bound by residues 10–17, 57–61, 119–122, 181–188, 229–233, and 294–297; these read GRPNVGKS, DTGGI, NKVD, DTAGM, and NKWD. The KH-like domain maps to 352 to 436; that stretch reads TRIPSAVLND…PIHLIARKRK (85 aa).

The protein belongs to the TRAFAC class TrmE-Era-EngA-EngB-Septin-like GTPase superfamily. EngA (Der) GTPase family. In terms of assembly, associates with the 50S ribosomal subunit.

In terms of biological role, GTPase that plays an essential role in the late steps of ribosome biogenesis. The sequence is that of GTPase Der from Streptococcus suis (strain 98HAH33).